Consider the following 237-residue polypeptide: Uridylate kinase (237 aa).

Lys-12–Gly-15 provides a ligand contact to ATP. Residues Gly-20–Gly-25 are involved in allosteric activation by GTP. Gly-54 serves as a coordination point for UMP. ATP-binding residues include Gly-55 and Arg-59. Residues Asp-72 and Thr-133–Thr-140 each bind UMP. ATP is bound by residues Tyr-166 and Asp-169.

Belongs to the UMP kinase family. In terms of assembly, homohexamer.

It localises to the cytoplasm. The enzyme catalyses UMP + ATP = UDP + ADP. The protein operates within pyrimidine metabolism; CTP biosynthesis via de novo pathway; UDP from UMP (UMPK route): step 1/1. Allosterically activated by GTP. Inhibited by UTP. Its function is as follows. Catalyzes the reversible phosphorylation of UMP to UDP. The chain is Uridylate kinase from Clostridium perfringens (strain SM101 / Type A).